The primary structure comprises 134 residues: Small ribosomal subunit protein uS8c (134 aa).

This sequence belongs to the universal ribosomal protein uS8 family. Part of the 30S ribosomal subunit.

Its subcellular location is the plastid. The protein localises to the chloroplast. One of the primary rRNA binding proteins, it binds directly to 16S rRNA central domain where it helps coordinate assembly of the platform of the 30S subunit. This is Small ribosomal subunit protein uS8c (rps8) from Gossypium hirsutum (Upland cotton).